Consider the following 226-residue polypeptide: Triosephosphate isomerase (226 aa).

10–12 provides a ligand contact to substrate; the sequence is NFK. The active-site Electrophile is the H96. Residue E144 is the Proton acceptor of the active site. Residues I149, G184, and 205–206 each bind substrate; that span reads AS.

The protein belongs to the triosephosphate isomerase family. As to quaternary structure, homotetramer; dimer of dimers.

The protein localises to the cytoplasm. It carries out the reaction D-glyceraldehyde 3-phosphate = dihydroxyacetone phosphate. It functions in the pathway carbohydrate biosynthesis; gluconeogenesis. It participates in carbohydrate degradation; glycolysis; D-glyceraldehyde 3-phosphate from glycerone phosphate: step 1/1. Functionally, involved in the gluconeogenesis. Catalyzes stereospecifically the conversion of dihydroxyacetone phosphate (DHAP) to D-glyceraldehyde-3-phosphate (G3P). The sequence is that of Triosephosphate isomerase from Methanopyrus kandleri (strain AV19 / DSM 6324 / JCM 9639 / NBRC 100938).